The sequence spans 283 residues: Thymidylate synthase (283 aa).

A dUMP-binding site is contributed by Arg-33. His-63 is a binding site for (6R)-5,10-methylene-5,6,7,8-tetrahydrofolate. 138-139 is a binding site for dUMP; sequence RR. The active-site Nucleophile is the Cys-158. Residues 185–188, Asn-196, and 226–228 each bind dUMP; these read RSAD and HIY. Position 188 (Asp-188) interacts with (6R)-5,10-methylene-5,6,7,8-tetrahydrofolate. Ala-282 is a (6R)-5,10-methylene-5,6,7,8-tetrahydrofolate binding site.

It belongs to the thymidylate synthase family. Bacterial-type ThyA subfamily. In terms of assembly, homodimer.

Its subcellular location is the cytoplasm. It carries out the reaction dUMP + (6R)-5,10-methylene-5,6,7,8-tetrahydrofolate = 7,8-dihydrofolate + dTMP. The protein operates within pyrimidine metabolism; dTTP biosynthesis. Catalyzes the reductive methylation of 2'-deoxyuridine-5'-monophosphate (dUMP) to 2'-deoxythymidine-5'-monophosphate (dTMP) while utilizing 5,10-methylenetetrahydrofolate (mTHF) as the methyl donor and reductant in the reaction, yielding dihydrofolate (DHF) as a by-product. This enzymatic reaction provides an intracellular de novo source of dTMP, an essential precursor for DNA biosynthesis. The protein is Thymidylate synthase of Methylibium petroleiphilum (strain ATCC BAA-1232 / LMG 22953 / PM1).